Reading from the N-terminus, the 315-residue chain is Glutaminase (315 aa).

Substrate-binding residues include S70, N120, E166, N173, Y197, Y249, and V267.

It belongs to the glutaminase family. In terms of assembly, homotetramer.

It carries out the reaction L-glutamine + H2O = L-glutamate + NH4(+). This is Glutaminase from Mesorhizobium japonicum (strain LMG 29417 / CECT 9101 / MAFF 303099) (Mesorhizobium loti (strain MAFF 303099)).